A 275-amino-acid polypeptide reads, in one-letter code: Malonyl-[acyl-carrier protein] O-methyltransferase (275 aa).

The protein belongs to the methyltransferase superfamily.

It catalyses the reaction malonyl-[ACP] + S-adenosyl-L-methionine = malonyl-[ACP] methyl ester + S-adenosyl-L-homocysteine. Its pathway is cofactor biosynthesis; biotin biosynthesis. In terms of biological role, converts the free carboxyl group of a malonyl-thioester to its methyl ester by transfer of a methyl group from S-adenosyl-L-methionine (SAM). It allows to synthesize pimeloyl-ACP via the fatty acid synthetic pathway. This Methylococcus capsulatus (strain ATCC 33009 / NCIMB 11132 / Bath) protein is Malonyl-[acyl-carrier protein] O-methyltransferase.